The sequence spans 236 residues: MAPDPWFSTYDSTCQIAQEIAEKIQERNQCERRGEKTPKLTLTIRTLLKNLKVKIDLLKDLLLRAVSTRQITQLEGDRRQNLLDDLVTRERLLLASFKNEGAEPDLIRSSLMSEEAKRGTPNPWLCEEPEETRGLGFDEIRQQQQKIIQEQDAGLDALSSIISRQKQMGQEIGNELDEQNEIIDDLANLVENTDEKLRTEARRVTLVDRKSTSCGMIMVILLLLVAIVVVAVWPTN.

The Cytoplasmic portion of the chain corresponds to 1-215; that stretch reads MAPDPWFSTY…LVDRKSTSCG (215 aa). Residues 42–65 are a coiled coil; it reads LTIRTLLKNLKVKIDLLKDLLLRA. The 63-residue stretch at 145–207 folds into the t-SNARE coiled-coil homology domain; it reads QKIIQEQDAG…RTEARRVTLV (63 aa). Ser-160 bears the Phosphoserine mark. Residues 216 to 232 traverse the membrane as a helical; Anchor for type IV membrane protein segment; the sequence is MIMVILLLLVAIVVVAV. Residues 233 to 236 lie on the Vesicular side of the membrane; that stretch reads WPTN.

This sequence belongs to the syntaxin family. Forms a SNARE complex with STX7, VTI1B and VAMP8 which functions in the homotypic fusion of late endosomes. Part of the SNARE core complex containing STX7, VAMP8 and VTI1B. Interacts with VAMP8. Interacts with HECTD3. Interacts with TPC1. Post-translationally, ubiquitinated by HECTD3.

Its subcellular location is the membrane. Functionally, vesicle trafficking protein that functions in the early secretory pathway, possibly by mediating retrograde transport from cis-Golgi membranes to the ER. This is Syntaxin-8 (Stx8) from Mus musculus (Mouse).